The chain runs to 419 residues: Transcription termination factor Rho (419 aa).

One can recognise a Rho RNA-BD domain in the interval 48–123; it reads EISGDGVLEI…LKVDTINFDR (76 aa). 3 RNA-binding regions span residues 61–66, 78–80, and 108–110; these read GFGFLR, DIY, and ERY. ATP-binding positions include 169–174, 181–186, and Arg-212; these read GKGQRG and KAGKTI. The segment at 284–288 is RNA-binding 2; the sequence is VLTGG.

The protein belongs to the Rho family. As to quaternary structure, homohexamer. The homohexamer assembles into an open ring structure.

Facilitates transcription termination by a mechanism that involves Rho binding to the nascent RNA, activation of Rho's RNA-dependent ATPase activity, and release of the mRNA from the DNA template. The sequence is that of Transcription termination factor Rho from Pseudomonas fluorescens biotype C.